The following is a 431-amino-acid chain: Enolase (431 aa).

Gln168 contacts (2R)-2-phosphoglycerate. Catalysis depends on Glu210, which acts as the Proton donor. Mg(2+) is bound by residues Asp247, Glu291, and Asp318. Positions 343, 372, 373, and 394 each coordinate (2R)-2-phosphoglycerate. The active-site Proton acceptor is Lys343.

This sequence belongs to the enolase family. Component of the RNA degradosome, a multiprotein complex involved in RNA processing and mRNA degradation. Mg(2+) is required as a cofactor.

The protein resides in the cytoplasm. Its subcellular location is the secreted. It localises to the cell surface. It catalyses the reaction (2R)-2-phosphoglycerate = phosphoenolpyruvate + H2O. It functions in the pathway carbohydrate degradation; glycolysis; pyruvate from D-glyceraldehyde 3-phosphate: step 4/5. Catalyzes the reversible conversion of 2-phosphoglycerate (2-PG) into phosphoenolpyruvate (PEP). It is essential for the degradation of carbohydrates via glycolysis. The sequence is that of Enolase from Acinetobacter baumannii (strain AYE).